A 483-amino-acid polypeptide reads, in one-letter code: PRAME family member 12 (483 aa).

One copy of the LRR 1; degenerate repeat lies at 97–122 (RWKLQVLDLRNVDENFWGIWSGASAL). One copy of the LRR 2; degenerate repeat lies at 177-201 (HVCCKELQIFGIAIHRIIEVLNTVE). One copy of the LRR 3; degenerate repeat lies at 202-228 (LDCIQEVEVCCPWELSILIRFAPYLGQ). One copy of the LRR 4; degenerate repeat lies at 229-264 (MRNLRKLVLFNIHVSACIPLDRKEQFVIQFTSQFLK). LRR repeat units follow at residues 265 to 290 (LDYFQKLYMHSVSFLEGHLDQLLRCL), 291 to 322 (QAPLETVVMTECLLSESDLKHLSWCPSIRQLK), 323 to 341 (ELDLRGITLTHFSPEPLSV), 347 to 374 (EATLQTLDLEDCGIVDSQLSAILPALSR), and 375 to 399 (CSQLSTFSFCGNLISMAALENLLRH).

The protein belongs to the PRAME family.

The chain is PRAME family member 12 from Homo sapiens (Human).